Here is a 266-residue protein sequence, read N- to C-terminus: Thymidylate synthase (266 aa).

Residue arginine 24 coordinates dUMP. Histidine 54 lines the (6R)-5,10-methylene-5,6,7,8-tetrahydrofolate pocket. Arginine 129–arginine 130 is a dUMP binding site. The Nucleophile role is filled by cysteine 149. DUMP contacts are provided by residues arginine 169–aspartate 172, asparagine 180, and histidine 210–tyrosine 212. Residue aspartate 172 participates in (6R)-5,10-methylene-5,6,7,8-tetrahydrofolate binding. Residue alanine 265 participates in (6R)-5,10-methylene-5,6,7,8-tetrahydrofolate binding.

Belongs to the thymidylate synthase family. Bacterial-type ThyA subfamily. As to quaternary structure, homodimer.

The protein resides in the cytoplasm. The enzyme catalyses dUMP + (6R)-5,10-methylene-5,6,7,8-tetrahydrofolate = 7,8-dihydrofolate + dTMP. The protein operates within pyrimidine metabolism; dTTP biosynthesis. Catalyzes the reductive methylation of 2'-deoxyuridine-5'-monophosphate (dUMP) to 2'-deoxythymidine-5'-monophosphate (dTMP) while utilizing 5,10-methylenetetrahydrofolate (mTHF) as the methyl donor and reductant in the reaction, yielding dihydrofolate (DHF) as a by-product. This enzymatic reaction provides an intracellular de novo source of dTMP, an essential precursor for DNA biosynthesis. This Mycolicibacterium paratuberculosis (strain ATCC BAA-968 / K-10) (Mycobacterium paratuberculosis) protein is Thymidylate synthase.